The primary structure comprises 692 residues: Elongation factor G (692 aa).

A tr-type G domain is found at 8-283; sequence NRIRNIGIAA…AVIDYLPAPT (276 aa). GTP is bound by residues 17-24, 81-85, and 135-138; these read AHIDAGKT, DTPGH, and NKMD.

Belongs to the TRAFAC class translation factor GTPase superfamily. Classic translation factor GTPase family. EF-G/EF-2 subfamily.

It is found in the cytoplasm. Its function is as follows. Catalyzes the GTP-dependent ribosomal translocation step during translation elongation. During this step, the ribosome changes from the pre-translocational (PRE) to the post-translocational (POST) state as the newly formed A-site-bound peptidyl-tRNA and P-site-bound deacylated tRNA move to the P and E sites, respectively. Catalyzes the coordinated movement of the two tRNA molecules, the mRNA and conformational changes in the ribosome. In Helicobacter acinonychis (strain Sheeba), this protein is Elongation factor G.